The following is a 728-amino-acid chain: 1,4-alpha-glucan branching enzyme GlgB (728 aa).

The active-site Nucleophile is Asp-409. Glu-462 serves as the catalytic Proton donor.

Belongs to the glycosyl hydrolase 13 family. GlgB subfamily. As to quaternary structure, monomer.

The enzyme catalyses Transfers a segment of a (1-&gt;4)-alpha-D-glucan chain to a primary hydroxy group in a similar glucan chain.. It participates in glycan biosynthesis; glycogen biosynthesis. In terms of biological role, catalyzes the formation of the alpha-1,6-glucosidic linkages in glycogen by scission of a 1,4-alpha-linked oligosaccharide from growing alpha-1,4-glucan chains and the subsequent attachment of the oligosaccharide to the alpha-1,6 position. The chain is 1,4-alpha-glucan branching enzyme GlgB from Cereibacter sphaeroides (strain ATCC 17023 / DSM 158 / JCM 6121 / CCUG 31486 / LMG 2827 / NBRC 12203 / NCIMB 8253 / ATH 2.4.1.) (Rhodobacter sphaeroides).